A 91-amino-acid chain; its full sequence is Small ribosomal subunit protein uS19 (91 aa).

A disordered region spans residues 72 to 91 (GEFSPTRKFGGHGDDKKKKK). The segment covering 82-91 (GHGDDKKKKK) has biased composition (basic and acidic residues).

This sequence belongs to the universal ribosomal protein uS19 family.

Its function is as follows. Protein S19 forms a complex with S13 that binds strongly to the 16S ribosomal RNA. This is Small ribosomal subunit protein uS19 from Spiroplasma kunkelii.